The primary structure comprises 761 residues: Protein spire homolog 1 (761 aa).

Disordered stretches follow at residues 1 to 23 (MTDGGMLISPSALQDPGDGARPE) and 160 to 183 (DCPDEGYEATEEEDEGEEENAEVS). In terms of domain architecture, KIND spans 36 to 223 (LCLEEILTLY…RALYAETKEL (188 aa)). The segment covering 160-180 (DCPDEGYEATEEEDEGEEENA) has biased composition (acidic residues). Residues 218 to 246 (AETKELRTFLEKIKSAKENLRKMEGETEE) are a coiled coil. WH2 domains are found at residues 295 to 313 (PYEMLMDDIRSKRYKLRKV) and 359 to 376 (LHERILEEIRSERKLRPV). Disordered stretches follow at residues 375–406 (PVSPDMIRRSRLGAGKSISTPQDLFRSSDIPD) and 419–539 (ANGT…KSLA). A compositionally biased stretch (low complexity) spans 469–480 (SSSSISTSLVED). Positions 504-520 (PDKRIAPQRRHSIEKEA) are enriched in basic and acidic residues. A spir-box region spans residues 557–577 (LTLTVEEVMHIRQVLVKAELE). 2 disordered regions span residues 630–694 (PSKP…DELE) and 728–761 (STKRARLHRRTHSVYSSSTSSSNYKPTERTIKEV). Low complexity predominate over residues 636-647 (SLPISSLGPSIL). A compositionally biased stretch (basic and acidic residues) spans 682–693 (KHGDRSSSKDEL). Basic residues predominate over residues 728–739 (STKRARLHRRTH). Residues 740-749 (SVYSSSTSSS) are compositionally biased toward low complexity.

This sequence belongs to the spire family.

The protein localises to the cytoplasm. The protein resides in the cytoskeleton. Its subcellular location is the cytosol. It localises to the cleavage furrow. It is found in the perinuclear region. The protein localises to the cell membrane. The protein resides in the cytoplasmic vesicle membrane. In terms of biological role, acts as an actin nucleation factor, remains associated with the slow-growing pointed end of the new filament. Involved in intracellular vesicle transport along actin fibers, providing a novel link between actin cytoskeleton dynamics and intracellular transport. Required for asymmetric spindle positioning and asymmetric cell division during meiosis. Required for normal formation of the cleavage furrow and for polar body extrusion during female germ cell meiosis. Also acts in the nucleus: together with FMN2, promotes assembly of nuclear actin filaments in response to DNA damage in order to facilitate movement of chromatin and repair factors after DNA damage. In addition, promotes innate immune signaling downstream of dsRNA sensing. Mechanistically, contributes to IRF3 phosphorylation and activation downstream of MAVS and upstream of TBK1. The polypeptide is Protein spire homolog 1 (Danio rerio (Zebrafish)).